A 501-amino-acid polypeptide reads, in one-letter code: Aspartate--tRNA ligase, cytoplasmic (501 aa).

At Thr-52 the chain carries Phosphothreonine. An N6-acetyllysine modification is found at Lys-74. Glu-229 provides a ligand contact to L-aspartate. Ser-249 is modified (phosphoserine). The tract at residues Gln-251–Lys-254 is aspartate. L-aspartate is bound at residue Arg-273. ATP is bound by residues Arg-273–Glu-275 and Arg-281–Leu-283. The residue at position 374 (Lys-374) is an N6-acetyllysine. Positions Lys-411–Ser-415 are binding site for the 3'-end of tRNA. Glu-424 serves as a coordination point for ATP. 2 residues coordinate L-aspartate: Ser-427 and Arg-431. Residue Gly-472–Arg-475 participates in ATP binding. Thr-500 is subject to Phosphothreonine; by PKA.

This sequence belongs to the class-II aminoacyl-tRNA synthetase family. Type 2 subfamily. As to quaternary structure, homodimer. Part of a multisubunit complex that groups tRNA ligases for Arg (RARS1), Asp (DARS1), Gln (QARS1), Ile (IARS1), Leu (LARS1), Lys (KARS1), Met (MARS1) the bifunctional ligase for Glu and Pro (EPRS1) and the auxiliary subunits AIMP1/p43, AIMP2/p38 and EEF1E1/p18. In terms of tissue distribution, expression in the developing and adult brain shows similar patterns. Highly expressed in the ventricular and subventricular zones, including hippocampal subfields, the midlateral temporal cortex and the frontal polar cortex. The cerebellum, cerebral cortex, hippocampus, and lateral ventricle show preferential neuronal expression. Expression in the peripheral neurons is evident in the colon.

It localises to the cytoplasm. It is found in the cytosol. The catalysed reaction is tRNA(Asp) + L-aspartate + ATP = L-aspartyl-tRNA(Asp) + AMP + diphosphate. In terms of biological role, catalyzes the specific attachment of an amino acid to its cognate tRNA in a 2 step reaction: the amino acid (AA) is first activated by ATP to form AA-AMP and then transferred to the acceptor end of the tRNA. The chain is Aspartate--tRNA ligase, cytoplasmic from Homo sapiens (Human).